A 321-amino-acid chain; its full sequence is uncharacterized protein (321 aa).

The region spanning 1–58 (MTPAQLRAYSAVVRLGSVRAAAAELGLSDAGVSMHVAALRKELDDPLFTRTGAGLAFT) is the HTH lysR-type domain. The H-T-H motif DNA-binding region spans 18–37 (VRAAAAELGLSDAGVSMHVA).

This sequence belongs to the LysR transcriptional regulatory family.

This is an uncharacterized protein from Mycobacterium tuberculosis (strain CDC 1551 / Oshkosh).